Here is a 363-residue protein sequence, read N- to C-terminus: UDP-N-acetylenolpyruvoylglucosamine reductase (363 aa).

One can recognise an FAD-binding PCMH-type domain in the interval 27-197 (LGGWATRVVT…LSVDFRLARS (171 aa)). Arginine 175 is a catalytic residue. The Proton donor role is filled by serine 252. Residue glutamate 355 is part of the active site.

This sequence belongs to the MurB family. It depends on FAD as a cofactor.

It is found in the cytoplasm. It carries out the reaction UDP-N-acetyl-alpha-D-muramate + NADP(+) = UDP-N-acetyl-3-O-(1-carboxyvinyl)-alpha-D-glucosamine + NADPH + H(+). It participates in cell wall biogenesis; peptidoglycan biosynthesis. Its function is as follows. Cell wall formation. This is UDP-N-acetylenolpyruvoylglucosamine reductase from Salinispora arenicola (strain CNS-205).